Reading from the N-terminus, the 70-residue chain is MPITSKYTNQKIEQIISDVFDVLEKHDASAELALMVVGNIATNIINADVPASKKKEIAEQFSQALLKSTK.

Belongs to the UPF0352 family.

This chain is UPF0352 protein PBPRA2586, found in Photobacterium profundum (strain SS9).